The primary structure comprises 792 residues: Probable beta-D-xylosidase 6 (792 aa).

The N-terminal stretch at 1–18 is a signal peptide; it reads MNLQLTLISLLFFTSAIA. 4 N-linked (GlcNAc...) asparagine glycosylation sites follow: asparagine 44, asparagine 104, asparagine 124, and asparagine 239. The active site involves aspartate 309. Residues asparagine 444 and asparagine 618 are each glycosylated (N-linked (GlcNAc...) asparagine).

The protein belongs to the glycosyl hydrolase 3 family.

The protein localises to the secreted. It localises to the extracellular space. The protein resides in the extracellular matrix. The polypeptide is Probable beta-D-xylosidase 6 (BXL6) (Arabidopsis thaliana (Mouse-ear cress)).